Reading from the N-terminus, the 94-residue chain is Aspartyl/glutamyl-tRNA(Asn/Gln) amidotransferase subunit C (94 aa).

The protein belongs to the GatC family. Heterotrimer of A, B and C subunits.

The enzyme catalyses L-glutamyl-tRNA(Gln) + L-glutamine + ATP + H2O = L-glutaminyl-tRNA(Gln) + L-glutamate + ADP + phosphate + H(+). It catalyses the reaction L-aspartyl-tRNA(Asn) + L-glutamine + ATP + H2O = L-asparaginyl-tRNA(Asn) + L-glutamate + ADP + phosphate + 2 H(+). In terms of biological role, allows the formation of correctly charged Asn-tRNA(Asn) or Gln-tRNA(Gln) through the transamidation of misacylated Asp-tRNA(Asn) or Glu-tRNA(Gln) in organisms which lack either or both of asparaginyl-tRNA or glutaminyl-tRNA synthetases. The reaction takes place in the presence of glutamine and ATP through an activated phospho-Asp-tRNA(Asn) or phospho-Glu-tRNA(Gln). This Opitutus terrae (strain DSM 11246 / JCM 15787 / PB90-1) protein is Aspartyl/glutamyl-tRNA(Asn/Gln) amidotransferase subunit C.